A 331-amino-acid polypeptide reads, in one-letter code: Phenylalanine--tRNA ligase alpha subunit (331 aa).

Glu252 is a binding site for Mg(2+).

This sequence belongs to the class-II aminoacyl-tRNA synthetase family. Phe-tRNA synthetase alpha subunit type 1 subfamily. Tetramer of two alpha and two beta subunits. Requires Mg(2+) as cofactor.

It is found in the cytoplasm. The enzyme catalyses tRNA(Phe) + L-phenylalanine + ATP = L-phenylalanyl-tRNA(Phe) + AMP + diphosphate + H(+). This is Phenylalanine--tRNA ligase alpha subunit from Stenotrophomonas maltophilia (strain R551-3).